We begin with the raw amino-acid sequence, 275 residues long: Peflin (275 aa).

8 repeat units span residues 21–29 (PPGGYYPGP), 31–39 (HGGGQYGSG), 41–49 (PPGGGYGAP), 50–59 (APGGPYGYPS), 60–68 (AGGVPSGTP), 76–84 (PPGGPYGQL), 85–91 (PPGGPYG), and 92–100 (TQPGHYGQG). Disordered stretches follow at residues 21–45 (PPGG…PGGG) and 59–103 (SAGG…GGVP). The 8 X 9 AA approximate tandem repeat of [AP]-P-G-G-P-Y-G-G-P-P stretch occupies residues 21–100 (PPGGYYPGPP…GTQPGHYGQG (80 aa)). A compositionally biased stretch (gly residues) spans 31 to 45 (HGGGQYGSGLPPGGG). Over residues 59–70 (SAGGVPSGTPSG) the composition is skewed to low complexity. 5 EF-hand domains span residues 105 to 140 (NVDP…SNWS), 146 to 174 (TCLM…WKFL), 172 to 207 (KFLQ…MGYN), 208 to 244 (LSPQ…LQVL), and 245 to 274 (TEAF…ASRM). Residues Asp-118, Asp-120, Ser-122, Tyr-124, and Glu-129 each coordinate Ca(2+). The Ca(2+) site is built by Asp-185, Asp-187, Ser-189, Ser-191, and Glu-196. Residues 195-275 (TELQQALSQM…FVTMTASRML (81 aa)) form a required for interaction with PDCD6 region.

In terms of assembly, heterodimer; heterodimerizes (via the EF-hand 5) with PDCD6. Dissociates from PDCD6 in presence of calcium. Ubiquitinated by the BCR(KLHL12) E3 ubiquitin ligase complex.

The protein resides in the cytoplasm. It localises to the endoplasmic reticulum. Its subcellular location is the membrane. The protein localises to the cytoplasmic vesicle. It is found in the COPII-coated vesicle membrane. Its function is as follows. Calcium-binding protein that acts as an adapter that bridges unrelated proteins or stabilizes weak protein-protein complexes in response to calcium. Together with PDCD6, acts as a calcium-dependent adapter for the BCR(KLHL12) complex, a complex involved in endoplasmic reticulum (ER)-Golgi transport by regulating the size of COPII coats. In response to cytosolic calcium increase, the heterodimer formed with PDCD6 interacts with, and bridges together the BCR(KLHL12) complex and SEC31 (SEC31A or SEC31B), promoting monoubiquitination of SEC31 and subsequent collagen export, which is required for neural crest specification. Its role in the heterodimer formed with PDCD6 is however unclear: some evidence shows that PEF1 and PDCD6 work together and promote association between PDCD6 and SEC31 in presence of calcium. Other reports show that PEF1 dissociates from PDCD6 in presence of calcium, and may act as a negative regulator of PDCD6. Also acts as a negative regulator of ER-Golgi transport; possibly by inhibiting interaction between PDCD6 and SEC31. The sequence is that of Peflin from Mus musculus (Mouse).